Here is a 617-residue protein sequence, read N- to C-terminus: pH-sensitive chloride channel 2 (617 aa).

An N-terminal signal peptide occupies residues 1–28 (MHSPGAAAYVFLQCLVALVAAVIAQSGA). Residues 29–387 (DQPPTTVVEV…VHLAREMGFY (359 aa)) lie on the Extracellular side of the membrane. An N-linked (GlcNAc...) asparagine glycan is attached at Asn57. Over residues 82 to 96 (TVSVDSSSTTTVAST) the composition is skewed to low complexity. A disordered region spans residues 82–110 (TVSVDSSSTTTVASTQEPTSTTERTMSPE). Polar residues predominate over residues 97-106 (QEPTSTTERT). Residue Asn130 is glycosylated (N-linked (GlcNAc...) asparagine). The segment covering 131–147 (ATDDNRPDAKSSGKDSE) has biased composition (basic and acidic residues). The tract at residues 131–155 (ATDDNRPDAKSSGKDSECPTLEGAD) is disordered. Asn184, Asn234, Asn351, and Asn370 each carry an N-linked (GlcNAc...) asparagine glycan. The chain crosses the membrane as a helical span at residues 388-408 (MMDYFIPSIMLVAISWVTFWL). At 409–414 (QADQSA) the chain is on the cytoplasmic side. The helical transmembrane segment at 415–434 (PRITLGTSTMLTFITLASAQ) threads the bilayer. Residues 435–447 (GKTLPKVSYIKAS) are Extracellular-facing. The chain crosses the membrane as a helical span at residues 448–468 (EIWFLGCTGFIFGSLVEFAFV). The Cytoplasmic portion of the chain corresponds to 469–596 (NTIWRRKRNV…VAIWIDKRSR (128 aa)). A helical membrane pass occupies residues 597 to 617 (FVFPIAFVIFNIFYWTFVYYV).

The protein belongs to the ligand-gated ion channel (TC 1.A.9) family.

It is found in the cell membrane. The enzyme catalyses chloride(in) = chloride(out). Its function is as follows. Ligand and pH-gated channel that mediates chloride transport in the mid-gut and thereby may function in larval metabolism and fluid homeostasis. Channel opening is triggered by zinc binding or, to a lesser extent, an increase in extracellular pH. The protein is pH-sensitive chloride channel 2 of Anopheles gambiae (African malaria mosquito).